A 119-amino-acid polypeptide reads, in one-letter code: Large ribosomal subunit protein bL20 (119 aa).

It belongs to the bacterial ribosomal protein bL20 family.

Its function is as follows. Binds directly to 23S ribosomal RNA and is necessary for the in vitro assembly process of the 50S ribosomal subunit. It is not involved in the protein synthesizing functions of that subunit. The protein is Large ribosomal subunit protein bL20 of Lactococcus lactis subsp. cremoris (strain MG1363).